Here is a 517-residue protein sequence, read N- to C-terminus: Serine hydroxymethyltransferase 1, mitochondrial (517 aa).

Residues 1 to 30 (MAMAMALRRLSSSIDKPIRPLIRSTSCYMS) constitute a mitochondrion transit peptide. Lys286 carries the N6-(pyridoxal phosphate)lysine modification.

It belongs to the SHMT family. Homotetramer. Interacts with GLU1. Interacts with UBP16. Pyridoxal 5'-phosphate serves as cofactor. In terms of processing, ubiquitinated. Ubiquitous. Mostly expressed in leaves, less abundant in stems, flowers and siliques, and barely detectable in roots.

It localises to the mitochondrion. Its subcellular location is the cytoplasm. It carries out the reaction (6R)-5,10-methylene-5,6,7,8-tetrahydrofolate + glycine + H2O = (6S)-5,6,7,8-tetrahydrofolate + L-serine. The protein operates within one-carbon metabolism; tetrahydrofolate interconversion. In terms of biological role, functions in the photorespiratory pathway in catalyzing the interconversion of serine and glycine. Involved in controlling cell damage caused by abiotic stress, such as high light and salt and the hypersensitive defense response of plants. The sequence is that of Serine hydroxymethyltransferase 1, mitochondrial from Arabidopsis thaliana (Mouse-ear cress).